A 692-amino-acid chain; its full sequence is MPRTVPIQDLRNIGIVAHIDAGKTTTTERILYYTGKTYKIGEVHEGAATMDWMPQEKERGITITAATTACYWAGKQINIIDTPGHVDFSVEVVRSMRVLDGIIFIFSAVEGVQPQSEANWRWADKFNVARIAFINKLDRLGADFYRVYDEIVKKLTIKPVAIQIPIGTEDNFVGVVDLMNMNAIIWLEETLGAKYEIRDIPEEYKAKAQEWREKMVESIAETDDTLMEKYLEGQEISTDELKQALRKATINKQLVPVLCGSSFKNKGVQPLLDAVVDYLPSPLDVPSVVGINPKTVQEETRLPEDDQPFCAYIFKVVSDPYAGQLSYFRVFSGKVQAGSYVLNSTKDKKERVGRLLLMHANTREDITEVAAGEIAAAVGVDAATGDTICDEKSPIILEKLEFPEPVISMAIEPKTKKDQEKLSQVLNKFMKEDPTFKASMDPETGQTLIHGMGELHLEIMVDRMKREYNIEVNVGKPQVAYKEAIKGKAVAEGKFIRQTGGRGQYGHVVIEVEPLERGSGFVFENAIVGGVIPKEFIPPVEEGIKEAMENGVLAGYPVVDVKVKLFDGSYHEVDSSEIAFKIAGSMAFKEAAKKASVVLLEPIMEVEVETPDDYVGDVIGDLNSRRGKIMGMENKGIITSIKAHVPLSEMFGYATNLRSLTQGRGTFIMKFSHYSEAPQSITEKVVGERTHT.

A tr-type G domain is found at 8-283; it reads QDLRNIGIVA…AVVDYLPSPL (276 aa). GTP contacts are provided by residues 17–24, 81–85, and 135–138; these read AHIDAGKT, DTPGH, and NKLD.

Belongs to the TRAFAC class translation factor GTPase superfamily. Classic translation factor GTPase family. EF-G/EF-2 subfamily.

It is found in the cytoplasm. In terms of biological role, catalyzes the GTP-dependent ribosomal translocation step during translation elongation. During this step, the ribosome changes from the pre-translocational (PRE) to the post-translocational (POST) state as the newly formed A-site-bound peptidyl-tRNA and P-site-bound deacylated tRNA move to the P and E sites, respectively. Catalyzes the coordinated movement of the two tRNA molecules, the mRNA and conformational changes in the ribosome. The protein is Elongation factor G of Hydrogenobaculum sp. (strain Y04AAS1).